A 194-amino-acid polypeptide reads, in one-letter code: Probable GTP-binding protein EngB (194 aa).

The EngB-type G domain occupies 22–194; sequence GKPEIALVGR…SVWEWITAHM (173 aa). Residues 30-37, 57-61, 75-78, 142-145, and 175-177 each bind GTP; these read GRSNVGKS, GKTQT, DVPG, TKSD, and FSS. Ser37 and Thr59 together coordinate Mg(2+).

The protein belongs to the TRAFAC class TrmE-Era-EngA-EngB-Septin-like GTPase superfamily. EngB GTPase family. It depends on Mg(2+) as a cofactor.

Its function is as follows. Necessary for normal cell division and for the maintenance of normal septation. The polypeptide is Probable GTP-binding protein EngB (Leuconostoc citreum (strain KM20)).